We begin with the raw amino-acid sequence, 137 residues long: uncharacterized protein (137 aa).

Over residues 1 to 10 (MISVDVPGHP) the composition is skewed to low complexity. Positions 1–23 (MISVDVPGHPGDAGGGGGGARKV) are disordered. Residues 11–20 (GDAGGGGGGA) show a composition bias toward gly residues.

This is an uncharacterized protein from Human adenovirus C serotype 2 (HAdV-2).